Reading from the N-terminus, the 623-residue chain is Kelch repeat and BTB domain-containing protein 11 (623 aa).

Residues 1–129 (MEHAVAPCVL…PEEPGEPAPV (129 aa)) form a disordered region. A compositionally biased stretch (low complexity) spans 12–31 (PGTEPGAAGESESEGAASPA). Positions 42-55 (CFSSGEESPPQSLA) are enriched in polar residues. Residues Ser-64, Ser-67, Ser-87, and Ser-107 each carry the phosphoserine modification. Residues 79 to 91 (EAGSAGAASPEEL) are compositionally biased toward low complexity. The BTB domain maps to 140-196 (PDLVLEVSGRRLRAHKAVLAARSDYFRARASRDVLRVQGVSLTALRLLLADAYSGRM). 4 Kelch repeats span residues 311-359 (RPQS…VLYN), 360-412 (YLFV…ALDG), 413-455 (HLYA…ATTC), and 458-500 (EIYV…ALDG).

The protein is Kelch repeat and BTB domain-containing protein 11 (KBTBD11) of Homo sapiens (Human).